The primary structure comprises 366 residues: N-methyltransferase fsqC (366 aa).

The first 18 residues, 1–18 (MSSNVQDIRGWPPPFANA), serve as a signal peptide directing secretion. Asn-270 carries an N-linked (GlcNAc...) asparagine glycan.

This sequence belongs to the methyltransferase superfamily.

It functions in the pathway secondary metabolite biosynthesis. Functionally, N-methyltransferase; part of the gene cluster that mediates the biosynthesis of the isoquinoline alkaloids fumisoquin A, fumisoquin B and fumisoquin C; as well as small amounts of fumipyrrole as a shunt metabolite. The products of the cluster lead to a brown coloration and are important for growth and conidiation. The nonribosomal peptide synthetase-like protein fsqF, which lacks a canonical condensation domain, is required for addition of a serine-derived dehydroalanine moiety to activated tyrosine but is not essential for the subsequent steps leading to isoquinoline formation. A different enzyme, most likely the ATP-grasp enzyme fsqD, is responsible for activation of tyrosine. Three additional enzymes encoded by the fsq cluster, the N-methyltransferase fsqC, the phenol 2-monooxygenase fsqG and the FAD-dependent oxidase fsqB, catalyze the formation of the isoquinoline ring system in the fumisoquins. FsqB converts the fspF thiolation domain-bound (2S,4S,5S)-2-amino-6-(3,4-dihydroxyphenyl)-4-hydroxy-5-(methylamino)hexanoyl into isoquinoline. The cyclization most likely proceeds via a two-step mechanism, beginning with FAD-dependent oxidation of the methyl group to an iminium species followed by electrophilic attack on the deprotonated phenol. This chain is N-methyltransferase fsqC, found in Aspergillus fumigatus (strain ATCC MYA-4609 / CBS 101355 / FGSC A1100 / Af293) (Neosartorya fumigata).